Consider the following 557-residue polypeptide: Kelch repeat and BTB domain-containing protein 2 (557 aa).

One can recognise a BTB domain in the interval 26 to 95; it reads CDVIITIRDG…LYNRHISSMN (70 aa). The region spanning 143 to 223 is the BACK domain; sequence IVKYIKRMLM…CIDIQNLDKK (81 aa). Kelch repeat units lie at residues 305–352, 353–399, and 415–464; these read EIII…VIDD, TIYA…VLDQ, and SVHA…SHED.

As to quaternary structure, interacts (via BTB domain) with host CUL3.

It is found in the host cytoplasm. Functionally, probable substrate-specific adapter of CUL3-containing E3 ubiquitin-protein ligases which mediate the ubiquitination and subsequent proteasomal degradation of host target proteins. This chain is Kelch repeat and BTB domain-containing protein 2 (KBTB2), found in Cowpox virus (strain Brighton Red) (CPV).